A 138-amino-acid chain; its full sequence is Large ribosomal subunit protein uL16 (138 aa).

Over residues 1–13 (MLQPKRRKYRKEQ) the composition is skewed to basic residues. Residues 1-20 (MLQPKRRKYRKEQKGRNTGI) form a disordered region.

Belongs to the universal ribosomal protein uL16 family. In terms of assembly, part of the 50S ribosomal subunit.

Functionally, binds 23S rRNA and is also seen to make contacts with the A and possibly P site tRNAs. The protein is Large ribosomal subunit protein uL16 of Paraburkholderia phytofirmans (strain DSM 17436 / LMG 22146 / PsJN) (Burkholderia phytofirmans).